The primary structure comprises 453 residues: MNIVILAAGTGKRMRSALPKVLHPLAGRPLLSHVIDTARTLQPSRLVVVVGHGAEQVQAAVAAPDVQFAVQAEQLGTGHAVRQALPLLDPAQPTLVLYGDVPLTRASTLQRLVDAARDGRYGILTVTLDDPTGYGRIVRDASGFVTRIVEQKDASPEELKIAEINTGIIVTPTAQLSMWLGALKNENAQGEYYLTDVVELAIEAGFEVVTSQPDEEWETLGVNSKAQLAELERIHQRNVADALLVDGVTLADPARVDVRGTLRCGRDVSIDVNCVFEGNVTLADNVTIGANCVIRNASVGAGTRIDAFTHIDGAELGANTVIGPYARLRPGAQLADEAHVGNFVEVKNAVIGHGSKANHLTYIGDADIGARVNIGAGTITCNYDGANKFRTVIEDDVFVGSDTQLVAPVRVGRGVTIAAGTTIWKDVAEGVLALNEKTQTAKSGYVRPVKKKS.

Residues 1-225 are pyrophosphorylase; the sequence is MNIVILAAGT…EWETLGVNSK (225 aa). Residues 6–9, Lys-20, Gln-71, 76–77, 98–100, Gly-135, Glu-150, Asn-165, and Asn-223 contribute to the UDP-N-acetyl-alpha-D-glucosamine site; these read LAAG, GT, and YGD. Asp-100 serves as a coordination point for Mg(2+). Residue Asn-223 coordinates Mg(2+). Positions 226 to 246 are linker; sequence AQLAELERIHQRNVADALLVD. Residues 247–453 are N-acetyltransferase; sequence GVTLADPARV…GYVRPVKKKS (207 aa). Residues Arg-329 and Lys-347 each contribute to the UDP-N-acetyl-alpha-D-glucosamine site. The Proton acceptor role is filled by His-359. 2 residues coordinate UDP-N-acetyl-alpha-D-glucosamine: Tyr-362 and Asn-373. Residues Ala-376, 382–383, Ser-401, and Ala-419 contribute to the acetyl-CoA site; that span reads NY.

This sequence in the N-terminal section; belongs to the N-acetylglucosamine-1-phosphate uridyltransferase family. The protein in the C-terminal section; belongs to the transferase hexapeptide repeat family. In terms of assembly, homotrimer. The cofactor is Mg(2+).

The protein resides in the cytoplasm. It catalyses the reaction alpha-D-glucosamine 1-phosphate + acetyl-CoA = N-acetyl-alpha-D-glucosamine 1-phosphate + CoA + H(+). The catalysed reaction is N-acetyl-alpha-D-glucosamine 1-phosphate + UTP + H(+) = UDP-N-acetyl-alpha-D-glucosamine + diphosphate. It functions in the pathway nucleotide-sugar biosynthesis; UDP-N-acetyl-alpha-D-glucosamine biosynthesis; N-acetyl-alpha-D-glucosamine 1-phosphate from alpha-D-glucosamine 6-phosphate (route II): step 2/2. Its pathway is nucleotide-sugar biosynthesis; UDP-N-acetyl-alpha-D-glucosamine biosynthesis; UDP-N-acetyl-alpha-D-glucosamine from N-acetyl-alpha-D-glucosamine 1-phosphate: step 1/1. The protein operates within bacterial outer membrane biogenesis; LPS lipid A biosynthesis. Catalyzes the last two sequential reactions in the de novo biosynthetic pathway for UDP-N-acetylglucosamine (UDP-GlcNAc). The C-terminal domain catalyzes the transfer of acetyl group from acetyl coenzyme A to glucosamine-1-phosphate (GlcN-1-P) to produce N-acetylglucosamine-1-phosphate (GlcNAc-1-P), which is converted into UDP-GlcNAc by the transfer of uridine 5-monophosphate (from uridine 5-triphosphate), a reaction catalyzed by the N-terminal domain. This chain is Bifunctional protein GlmU, found in Burkholderia orbicola (strain MC0-3).